Consider the following 89-residue polypeptide: MARMVFCKKYQQELEGLALPPMPGARGKELFETVSKKAWQEWLQHQTMLINEKRLNLMDPDARTYLTEQMEKFLNNENFDAAEGFVPKD.

The protein belongs to the Fe(2+)-trafficking protein family.

Its function is as follows. Could be a mediator in iron transactions between iron acquisition and iron-requiring processes, such as synthesis and/or repair of Fe-S clusters in biosynthetic enzymes. This Hahella chejuensis (strain KCTC 2396) protein is Probable Fe(2+)-trafficking protein.